A 596-amino-acid chain; its full sequence is SUN domain-containing protein 4 (596 aa).

A helical membrane pass occupies residues 28–48 (VSLSLVFLIWGLVFLSTLWIS). Disordered stretches follow at residues 58–98 (LVDS…LSSD) and 139–158 (KQSE…TTGS). Acidic residues predominate over residues 66-77 (EPDDERADETAE). Composition is skewed to polar residues over residues 80-95 (DATS…NPGL) and 141-158 (SEIN…TTGS). One can recognise an SUN domain in the interval 179-343 (SNSRDKSLSG…SLLEVYGVDA (165 aa)). A compositionally biased stretch (basic and acidic residues) spans 366–396 (DTEQKEKKTMQAKESFESDEDKSKQKEKEQE). The tract at residues 366-410 (DTEQKEKKTMQAKESFESDEDKSKQKEKEQEASPENAVVKDEVSL) is disordered. The stretch at 475–544 (ASKREKEVET…LERLEWMEKK (70 aa)) forms a coiled coil. 2 helical membrane-spanning segments follow: residues 545-565 (GVVV…AVVF) and 576-596 (GGLA…ILSL).

Forms homomers and heteromers with SUN3. Interacts with SUN1, SUN2 and TIK.

It is found in the nucleus membrane. The protein localises to the endoplasmic reticulum membrane. Functionally, encodes a member of the mid-SUN subfamily of SUN-domain proteins that is localized to both the nuclear envelope and the ER. It is involved in early seed development and nuclear morphology. [TAIR]. This chain is SUN domain-containing protein 4, found in Arabidopsis thaliana (Mouse-ear cress).